The primary structure comprises 883 residues: Bifunctional heparan sulfate N-deacetylase/N-sulfotransferase 2 (883 aa).

At 1–18 the chain is on the cytoplasmic side; the sequence is MLQLWKVVRPARQLELHR. Residues 19-39 traverse the membrane as a helical; Signal-anchor for type II membrane protein segment; it reads LILLLIAFSLGSMGFLAYYVS. At 40 to 883 the chain is on the lumenal side; sequence TSPKAKEPLP…REELQHSSLG (844 aa). Residues 41-597 form a heparan sulfate N-deacetylase 2 region; it reads SPKAKEPLPL…KRHKDIWSKE (557 aa). The tract at residues 49 to 81 is disordered; sequence PLPLGDCSSGGAAGPGPARPPVPPRPPRPPETA. Positions 65-78 are enriched in pro residues; the sequence is PARPPVPPRPPRPP. N-linked (GlcNAc...) asparagine glycans are attached at residues Asn233, Asn350, and Asn400. Residues 598–883 are heparan sulfate N-sulfotransferase 2; sequence KTCDRLPKFL…REELQHSSLG (286 aa). Lys613 serves as the catalytic For sulfotransferase activity. Residue 613-617 coordinates 3'-phosphoadenylyl sulfate; that stretch reads KTGTT. N-linked (GlcNAc...) asparagine glycosylation is present at Asn666. Residue Ser711 participates in 3'-phosphoadenylyl sulfate binding. N-linked (GlcNAc...) asparagine glycans are attached at residues Asn726 and Asn802. A disulfide bond links Cys817 and Cys827. Residue 832 to 836 participates in 3'-phosphoadenylyl sulfate binding; that stretch reads KGRRY.

This sequence belongs to the sulfotransferase 1 family. NDST subfamily. In terms of assembly, monomer.

The protein resides in the golgi apparatus membrane. It catalyses the reaction alpha-D-glucosaminyl-[heparan sulfate](n) + 3'-phosphoadenylyl sulfate = N-sulfo-alpha-D-glucosaminyl-[heparan sulfate](n) + adenosine 3',5'-bisphosphate + 2 H(+). It participates in glycan metabolism; heparan sulfate biosynthesis. The protein operates within glycan metabolism; heparin biosynthesis. In terms of biological role, essential bifunctional enzyme that catalyzes both the N-deacetylation and the N-sulfation of glucosamine (GlcNAc) of the glycosaminoglycan in heparan sulfate. Modifies the GlcNAc-GlcA disaccharide repeating sugar backbone to make N-sulfated heparosan, a prerequisite substrate for later modifications in heparin biosynthesis. Plays a role in determining the extent and pattern of sulfation of heparan sulfate. Required for the exosomal release of SDCBP, CD63 and syndecan. This is Bifunctional heparan sulfate N-deacetylase/N-sulfotransferase 2 (NDST2) from Homo sapiens (Human).